Reading from the N-terminus, the 291-residue chain is 4-hydroxy-tetrahydrodipicolinate synthase (291 aa).

Threonine 44 contacts pyruvate. Residue tyrosine 132 is the Proton donor/acceptor of the active site. Lysine 160 acts as the Schiff-base intermediate with substrate in catalysis. Isoleucine 202 contacts pyruvate.

This sequence belongs to the DapA family. In terms of assembly, homotetramer; dimer of dimers.

The protein localises to the cytoplasm. It catalyses the reaction L-aspartate 4-semialdehyde + pyruvate = (2S,4S)-4-hydroxy-2,3,4,5-tetrahydrodipicolinate + H2O + H(+). Its pathway is amino-acid biosynthesis; L-lysine biosynthesis via DAP pathway; (S)-tetrahydrodipicolinate from L-aspartate: step 3/4. Catalyzes the condensation of (S)-aspartate-beta-semialdehyde [(S)-ASA] and pyruvate to 4-hydroxy-tetrahydrodipicolinate (HTPA). This Syntrophobacter fumaroxidans (strain DSM 10017 / MPOB) protein is 4-hydroxy-tetrahydrodipicolinate synthase.